The primary structure comprises 322 residues: Solute carrier family 35 member B1 (322 aa).

Transmembrane regions (helical) follow at residues 12-32, 51-71, 85-105, 136-156, 168-188, 210-230, 243-263, and 285-305; these read LRLP…GILQ, FALT…KILI, WLYA…NSAL, YPLA…LFMY, TVGF…LTGV, LWST…WEFL, ILLF…TVVY, and VILF…LVFL. Positions 318-322 match the Di-lysine motif motif; sequence KKTSH.

Belongs to the nucleotide-sugar transporter family. SLC35B subfamily.

Its subcellular location is the endoplasmic reticulum membrane. The catalysed reaction is ADP(in) + ATP(out) = ADP(out) + ATP(in). It catalyses the reaction UDP(out) + ATP(in) = UDP(in) + ATP(out). It carries out the reaction UTP(out) + ATP(in) = UTP(in) + ATP(out). The enzyme catalyses dATP(out) + ATP(in) = dATP(in) + ATP(out). Its function is as follows. ATP:ADP antiporter that catalyzes the exchange of ATP and ADP across the endoplasmic reticulum (ER) membrane. Imports ATP from the cytosol to the ER lumen and exports ADP in the opposite direction. Regulates ER energy metabolism and protein biogenesis. Appears to be part of a calcium-dependent ER to cytosol low energy response axis, where calcium efflux from ER to the cytosol triggers ATP import into the ER lumen to maintain sufficient ATP supply. Provides ATP to ER chaperone HSPA5 that drives protein folding and trafficking in the ER. Can transport dATP, UTP or UDP in exchange for ATP, but the physiological relevance of this process remains to be established. This Mus musculus (Mouse) protein is Solute carrier family 35 member B1 (Slc35b1).